A 902-amino-acid chain; its full sequence is Glutamate receptor 4 (902 aa).

A signal peptide spans 1–20; sequence MRIICRQIVLLFSGFWGLAM. The Extracellular portion of the chain corresponds to 22 to 544; the sequence is AFPSSVQIGG…GVFSFLDPLA (523 aa). 6 N-linked (GlcNAc...) asparagine glycosylation sites follow: asparagine 52, asparagine 56, asparagine 258, asparagine 371, asparagine 407, and asparagine 414. The cysteines at positions 84 and 331 are disulfide-linked. The L-glutamate site is built by proline 500, threonine 502, and arginine 507. Residues 545 to 565 form a helical membrane-spanning segment; sequence YEIWMCIVFAYIGVSVVLFLV. The Cytoplasmic segment spans residues 566 to 592; sequence SRFSPYEWHTEEPEDGKEGPSDQPPNE. The segment at residues 593–608 is an intramembrane region (helical; Pore-forming); it reads FGIFNSLWFSLGAFMQ. The stretch at 609-611 is an intramembrane region; it reads QGC. Cysteine 611 carries the S-palmitoyl cysteine lipid modification. The Cytoplasmic segment spans residues 612-617; that stretch reads DISPRS. The chain crosses the membrane as a helical span at residues 618-638; that stretch reads LSGRIVGGVWWFFTLIIISSY. The Extracellular portion of the chain corresponds to 639-813; the sequence is TANLAAFLTV…DKTSALSLSN (175 aa). Positions 676, 677, and 727 each coordinate L-glutamate. Residues cysteine 740 and cysteine 795 are joined by a disulfide bond. The helical transmembrane segment at 814 to 834 threads the bilayer; the sequence is VAGVFYILVGGLGLAMLVALI. Topologically, residues 835–902 are cytoplasmic; that stretch reads EFCYKSRAEA…GLAVIASDLP (68 aa). The S-palmitoyl cysteine moiety is linked to residue cysteine 837. Phosphoserine is present on serine 862.

It belongs to the glutamate-gated ion channel (TC 1.A.10.1) family. GRIA4 subfamily. Homotetramer or heterotetramer of pore-forming glutamate receptor subunits. Tetramers may be formed by the dimerization of dimers. Interacts with EPB41L1 via its C-terminus. Isoform 3 interacts with PICK1. Found in a complex with GRIA1, GRIA2, GRIA3, CNIH2, CNIH3, CACNG2, CACNG3, CACNG4, CACNG5, CACNG7 and CACNG8. Interacts with CACNG5 and PRKCG. Found in a complex with GRIA1, GRIA2, GRIA3, DLG4, CACNG8 and CNIH2. In terms of processing, palmitoylated. Depalmitoylated upon L-glutamate stimulation. ZDHHC3/GODZ specifically palmitoylates Cys-611, which leads to Golgi retention and decreased cell surface expression. In contrast, Cys-837 palmitoylation does not affect cell surface expression but regulates stimulation-dependent endocytosis. Phosphorylated at Ser-862 by PRKCG; phosphorylation increases plasma membrane-associated GRI4 expression.

The protein localises to the cell membrane. The protein resides in the postsynaptic cell membrane. It is found in the cell projection. Its subcellular location is the dendrite. The enzyme catalyses Ca(2+)(in) = Ca(2+)(out). It carries out the reaction Na(+)(in) = Na(+)(out). It catalyses the reaction Mg(2+)(in) = Mg(2+)(out). Functionally, ionotropic glutamate receptor that functions as a ligand-gated cation channel, gated by L-glutamate and glutamatergic agonists such as alpha-amino-3-hydroxy-5-methyl-4-isoxazolepropionic acid (AMPA), quisqualic acid, and kainic acid. L-glutamate acts as an excitatory neurotransmitter at many synapses in the central nervous system and plays an important role in fast excitatory synaptic transmission. Binding of the excitatory neurotransmitter L-glutamate induces a conformation change, leading to the opening of the cation channel, and thereby converts the chemical signal to an electrical impulse upon entry of monovalent and divalent cations such as sodium and calcium. The receptor then desensitizes rapidly and enters a transient inactive state, characterized by the presence of bound agonist. In the presence of CACNG8, shows resensitization which is characterized by a delayed accumulation of current flux upon continued application of L-glutamate. In Mus musculus (Mouse), this protein is Glutamate receptor 4.